A 423-amino-acid polypeptide reads, in one-letter code: Phytoene synthase, chloroplastic (423 aa).

The N-terminal 136 residues, M1 to C136, are a transit peptide targeting the chloroplast.

Belongs to the phytoene/squalene synthase family. Monomer.

The protein resides in the plastid. The protein localises to the chloroplast. The catalysed reaction is 2 (2E,6E,10E)-geranylgeranyl diphosphate = 15-cis-phytoene + 2 diphosphate. It functions in the pathway carotenoid biosynthesis; phytoene biosynthesis; all-trans-phytoene from geranylgeranyl diphosphate: step 1/1. Its function is as follows. Catalyzes the reaction from prephytoene diphosphate to phytoene. The sequence is that of Phytoene synthase, chloroplastic (PSY) from Narcissus pseudonarcissus (Daffodil).